Reading from the N-terminus, the 148-residue chain is Large ribosomal subunit protein bL9 (148 aa).

The protein belongs to the bacterial ribosomal protein bL9 family.

Its function is as follows. Binds to the 23S rRNA. The sequence is that of Large ribosomal subunit protein bL9 from Geobacter metallireducens (strain ATCC 53774 / DSM 7210 / GS-15).